Here is a 787-residue protein sequence, read N- to C-terminus: ER degradation-enhancing alpha-mannosidase-like protein 1 (787 aa).

The N-terminal stretch at 1–22 (MGSLHSIFCVCLILLCIFKENS) is a signal peptide. Residues asparagine 479, asparagine 609, asparagine 670, asparagine 693, and asparagine 756 are each glycosylated (N-linked (GlcNAc...) asparagine).

The protein belongs to the glycosyl hydrolase 47 family.

It is found in the endoplasmic reticulum lumen. Functionally, alpha-mannosidase-like protein involved in endoplasmic reticulum-associated degradation (ERAD). Delivers misfolded glycoproteins to proteasomes. It lacks mannosidase activity. The polypeptide is ER degradation-enhancing alpha-mannosidase-like protein 1 (mnl1) (Schizosaccharomyces pombe (strain 972 / ATCC 24843) (Fission yeast)).